A 356-amino-acid polypeptide reads, in one-letter code: S-adenosylmethionine:tRNA ribosyltransferase-isomerase (356 aa).

The protein belongs to the QueA family. In terms of assembly, monomer.

The protein resides in the cytoplasm. The catalysed reaction is 7-aminomethyl-7-carbaguanosine(34) in tRNA + S-adenosyl-L-methionine = epoxyqueuosine(34) in tRNA + adenine + L-methionine + 2 H(+). It participates in tRNA modification; tRNA-queuosine biosynthesis. Transfers and isomerizes the ribose moiety from AdoMet to the 7-aminomethyl group of 7-deazaguanine (preQ1-tRNA) to give epoxyqueuosine (oQ-tRNA). This Xanthomonas campestris pv. campestris (strain 8004) protein is S-adenosylmethionine:tRNA ribosyltransferase-isomerase.